The following is a 401-amino-acid chain: S-adenosylmethionine synthase (401 aa).

137 to 142 serves as a coordination point for ATP; that stretch reads GEGSGD. The segment at 272–305 is disordered; it reads GTSAEQGDDGSVGRGNRSNGLITPNRSMSMEATS. The segment covering 287–305 has biased composition (polar residues); sequence NRSNGLITPNRSMSMEATS.

This sequence belongs to the AdoMet synthase 2 family. Requires Mg(2+) as cofactor.

The enzyme catalyses L-methionine + ATP + H2O = S-adenosyl-L-methionine + phosphate + diphosphate. It functions in the pathway amino-acid biosynthesis; S-adenosyl-L-methionine biosynthesis; S-adenosyl-L-methionine from L-methionine: step 1/1. Catalyzes the formation of S-adenosylmethionine from methionine and ATP. This chain is S-adenosylmethionine synthase, found in Natronomonas pharaonis (strain ATCC 35678 / DSM 2160 / CIP 103997 / JCM 8858 / NBRC 14720 / NCIMB 2260 / Gabara) (Halobacterium pharaonis).